The primary structure comprises 181 residues: Large ribosomal subunit protein uL5 (181 aa).

It belongs to the universal ribosomal protein uL5 family. As to quaternary structure, part of the 50S ribosomal subunit; part of the 5S rRNA/L5/L18/L25 subcomplex. Contacts the 5S rRNA and the P site tRNA. Forms a bridge to the 30S subunit in the 70S ribosome.

Its function is as follows. This is one of the proteins that bind and probably mediate the attachment of the 5S RNA into the large ribosomal subunit, where it forms part of the central protuberance. In the 70S ribosome it contacts protein S13 of the 30S subunit (bridge B1b), connecting the 2 subunits; this bridge is implicated in subunit movement. Contacts the P site tRNA; the 5S rRNA and some of its associated proteins might help stabilize positioning of ribosome-bound tRNAs. This is Large ribosomal subunit protein uL5 from Desulforamulus reducens (strain ATCC BAA-1160 / DSM 100696 / MI-1) (Desulfotomaculum reducens).